The following is a 118-amino-acid chain: Small ribosomal subunit protein uS13 (118 aa).

The segment at 95–118 (LPVRGQRTRTNARTRKGPKKLINK) is disordered.

The protein belongs to the universal ribosomal protein uS13 family. Part of the 30S ribosomal subunit. Forms a loose heterodimer with protein S19. Forms two bridges to the 50S subunit in the 70S ribosome.

Its function is as follows. Located at the top of the head of the 30S subunit, it contacts several helices of the 16S rRNA. In the 70S ribosome it contacts the 23S rRNA (bridge B1a) and protein L5 of the 50S subunit (bridge B1b), connecting the 2 subunits; these bridges are implicated in subunit movement. Contacts the tRNAs in the A and P-sites. The chain is Small ribosomal subunit protein uS13 from Blochmanniella floridana.